Consider the following 120-residue polypeptide: MFVLSGYDAFLGFLLIATAVPVLALLTNKILAPKSRNGERELTYESGMEPVGGAWIQFNIRYYMFALVFVIFDVETVFLYPWAVAFHRLGLLAFIEALIFIAILVIALAYAWRKGALEWS.

3 consecutive transmembrane segments (helical) span residues 6 to 26, 64 to 84, and 89 to 109; these read GYDA…LALL, MFAL…PWAV, and LGLL…IALA.

Belongs to the complex I subunit 3 family. In terms of assembly, NDH is composed of at least 16 different subunits, 5 of which are encoded in the nucleus.

The protein resides in the plastid. It is found in the organellar chromatophore thylakoid membrane. The enzyme catalyses a plastoquinone + NADH + (n+1) H(+)(in) = a plastoquinol + NAD(+) + n H(+)(out). It carries out the reaction a plastoquinone + NADPH + (n+1) H(+)(in) = a plastoquinol + NADP(+) + n H(+)(out). In terms of biological role, NDH shuttles electrons from NAD(P)H:plastoquinone, via FMN and iron-sulfur (Fe-S) centers, to quinones in the photosynthetic chain and possibly in a chloroplast respiratory chain. The immediate electron acceptor for the enzyme in this species is believed to be plastoquinone. Couples the redox reaction to proton translocation, and thus conserves the redox energy in a proton gradient. The polypeptide is NAD(P)H-quinone oxidoreductase subunit 3, organellar chromatophore (Paulinella chromatophora).